Consider the following 82-residue polypeptide: Sodium channel neurotoxin MeuNaTxalpha-3 (82 aa).

Positions 1–8 (LVMAGVES) are cleaved as a signal peptide. The LCN-type CS-alpha/beta domain occupies 10–80 (RDGHIARNNN…VPIKVPGDCH (71 aa)). 4 cysteine pairs are disulfide-bonded: Cys20/Cys79, Cys24/Cys52, Cys38/Cys62, and Cys42/Cys64.

Expressed by the venom gland.

Its subcellular location is the secreted. Alpha toxins bind voltage-independently at site-3 of sodium channels (Nav) and inhibit the inactivation of the activated channels, thereby blocking neuronal transmission. The chain is Sodium channel neurotoxin MeuNaTxalpha-3 from Mesobuthus eupeus (Lesser Asian scorpion).